A 508-amino-acid chain; its full sequence is Histidine ammonia-lyase (508 aa).

The 5-imidazolinone (Ala-Gly) cross-link spans 143 to 145 (ASG). Ser-144 carries the 2,3-didehydroalanine (Ser) modification.

It belongs to the PAL/histidase family. In terms of processing, contains an active site 4-methylidene-imidazol-5-one (MIO), which is formed autocatalytically by cyclization and dehydration of residues Ala-Ser-Gly.

It is found in the cytoplasm. It catalyses the reaction L-histidine = trans-urocanate + NH4(+). Its pathway is amino-acid degradation; L-histidine degradation into L-glutamate; N-formimidoyl-L-glutamate from L-histidine: step 1/3. This chain is Histidine ammonia-lyase, found in Klebsiella pneumoniae subsp. pneumoniae (strain ATCC 700721 / MGH 78578).